We begin with the raw amino-acid sequence, 1027 residues long: Multidrug resistance protein MdtC (1027 aa).

Transmembrane regions (helical) follow at residues L16–P36, E333–L353, L360–C380, L387–L407, V431–L451, F463–P483, W528–P548, L853–S873, I875–L895, L897–V917, P953–G973, and I984–I1004.

This sequence belongs to the resistance-nodulation-cell division (RND) (TC 2.A.6) family. MdtC subfamily. In terms of assembly, part of a tripartite efflux system composed of MdtA, MdtB and MdtC. MdtC forms a heteromultimer with MdtB.

The protein localises to the cell inner membrane. This is Multidrug resistance protein MdtC from Proteus mirabilis (strain HI4320).